Reading from the N-terminus, the 187-residue chain is Elongation factor P (187 aa).

Belongs to the elongation factor P family.

The protein resides in the cytoplasm. Its pathway is protein biosynthesis; polypeptide chain elongation. In terms of biological role, involved in peptide bond synthesis. Stimulates efficient translation and peptide-bond synthesis on native or reconstituted 70S ribosomes in vitro. Probably functions indirectly by altering the affinity of the ribosome for aminoacyl-tRNA, thus increasing their reactivity as acceptors for peptidyl transferase. This Prochlorococcus marinus (strain NATL1A) protein is Elongation factor P.